A 63-amino-acid polypeptide reads, in one-letter code: Large ribosomal subunit protein uL29 (63 aa).

It belongs to the universal ribosomal protein uL29 family.

This Aliivibrio fischeri (strain ATCC 700601 / ES114) (Vibrio fischeri) protein is Large ribosomal subunit protein uL29.